The following is a 198-amino-acid chain: Thioredoxin reductase-like selenoprotein T homolog CG3887 (198 aa).

The signal sequence occupies residues 1–25 (MERLTGRNVALLVLCLCAGYALVFA). C49 and C52 form a disulfide bridge.

This sequence belongs to the SelWTH family. SELT subfamily.

The enzyme catalyses [thioredoxin]-dithiol + NADP(+) = [thioredoxin]-disulfide + NADPH + H(+). Functionally, probably has thioredoxin reductase-like oxidoreductase activity. The sequence is that of Thioredoxin reductase-like selenoprotein T homolog CG3887 from Drosophila melanogaster (Fruit fly).